A 189-amino-acid chain; its full sequence is GMP synthase [glutamine-hydrolyzing] subunit A (189 aa).

The Glutamine amidotransferase type-1 domain occupies 1–189 (MIVILNNGGQ…CKKCGFGFEE (189 aa)). Cys-76 acts as the Nucleophile in catalysis. Catalysis depends on residues His-163 and Glu-165.

In terms of assembly, heterodimer composed of a glutamine amidotransferase subunit (A) and a GMP-binding subunit (B).

The catalysed reaction is XMP + L-glutamine + ATP + H2O = GMP + L-glutamate + AMP + diphosphate + 2 H(+). Its pathway is purine metabolism; GMP biosynthesis; GMP from XMP (L-Gln route): step 1/1. Catalyzes the synthesis of GMP from XMP. The protein is GMP synthase [glutamine-hydrolyzing] subunit A of Methanococcus maripaludis (strain DSM 14266 / JCM 13030 / NBRC 101832 / S2 / LL).